The chain runs to 316 residues: Porphobilinogen deaminase (316 aa).

Cys-249 carries the post-translational modification S-(dipyrrolylmethanemethyl)cysteine.

Belongs to the HMBS family. Monomer. It depends on dipyrromethane as a cofactor.

The enzyme catalyses 4 porphobilinogen + H2O = hydroxymethylbilane + 4 NH4(+). It functions in the pathway porphyrin-containing compound metabolism; protoporphyrin-IX biosynthesis; coproporphyrinogen-III from 5-aminolevulinate: step 2/4. Tetrapolymerization of the monopyrrole PBG into the hydroxymethylbilane pre-uroporphyrinogen in several discrete steps. The chain is Porphobilinogen deaminase from Nitrobacter winogradskyi (strain ATCC 25391 / DSM 10237 / CIP 104748 / NCIMB 11846 / Nb-255).